A 353-amino-acid chain; its full sequence is Paraneoplastic antigen Ma1 (353 aa).

This sequence belongs to the PNMA family. In terms of tissue distribution, testis- and brain-specific. In some cancer patients, specifically expressed by paraneoplastic tumor cells.

Its subcellular location is the nucleus. The protein localises to the nucleolus. The sequence is that of Paraneoplastic antigen Ma1 (PNMA1) from Homo sapiens (Human).